A 178-amino-acid polypeptide reads, in one-letter code: CDP-archaeol synthase (178 aa).

4 consecutive transmembrane segments (helical) span residues 3-23 (LLLL…ANAV), 56-76 (FFGI…VILY), 91-111 (IILS…GSFI), and 136-156 (LLFA…LLVI).

It belongs to the CDP-archaeol synthase family. The cofactor is Mg(2+).

The protein resides in the cell membrane. The enzyme catalyses 2,3-bis-O-(geranylgeranyl)-sn-glycerol 1-phosphate + CTP + H(+) = CDP-2,3-bis-O-(geranylgeranyl)-sn-glycerol + diphosphate. The protein operates within membrane lipid metabolism; glycerophospholipid metabolism. In terms of biological role, catalyzes the formation of CDP-2,3-bis-(O-geranylgeranyl)-sn-glycerol (CDP-archaeol) from 2,3-bis-(O-geranylgeranyl)-sn-glycerol 1-phosphate (DGGGP) and CTP. This reaction is the third ether-bond-formation step in the biosynthesis of archaeal membrane lipids. The sequence is that of CDP-archaeol synthase from Methanococcus maripaludis (strain C5 / ATCC BAA-1333).